The chain runs to 134 residues: Protein NrdI (134 aa).

It belongs to the NrdI family.

Probably involved in ribonucleotide reductase function. The sequence is that of Protein NrdI from Yersinia pseudotuberculosis serotype O:1b (strain IP 31758).